A 477-amino-acid polypeptide reads, in one-letter code: Glutamate--tRNA ligase (477 aa).

A 'HIGH' region motif is present at residues 8 to 18; the sequence is PSPTGTLHIGT. The short motif at 247-251 is the 'KMSKS' region element; it reads KLSKR. Residue K250 participates in ATP binding.

This sequence belongs to the class-I aminoacyl-tRNA synthetase family. Glutamate--tRNA ligase type 1 subfamily. In terms of assembly, monomer.

The protein resides in the cytoplasm. It carries out the reaction tRNA(Glu) + L-glutamate + ATP = L-glutamyl-tRNA(Glu) + AMP + diphosphate. Its function is as follows. Catalyzes the attachment of glutamate to tRNA(Glu) in a two-step reaction: glutamate is first activated by ATP to form Glu-AMP and then transferred to the acceptor end of tRNA(Glu). The protein is Glutamate--tRNA ligase of Synechococcus sp. (strain CC9605).